The following is a 396-amino-acid chain: Tryptophan synthase beta chain (396 aa).

Position 88 is an N6-(pyridoxal phosphate)lysine (Lys88).

It belongs to the TrpB family. In terms of assembly, tetramer of two alpha and two beta chains. Pyridoxal 5'-phosphate serves as cofactor.

The catalysed reaction is (1S,2R)-1-C-(indol-3-yl)glycerol 3-phosphate + L-serine = D-glyceraldehyde 3-phosphate + L-tryptophan + H2O. It participates in amino-acid biosynthesis; L-tryptophan biosynthesis; L-tryptophan from chorismate: step 5/5. Its function is as follows. The beta subunit is responsible for the synthesis of L-tryptophan from indole and L-serine. The chain is Tryptophan synthase beta chain from Shewanella sp. (strain MR-7).